Here is a 736-residue protein sequence, read N- to C-terminus: Zinc finger CCCH domain-containing protein 14 (736 aa).

Methionine 1 is modified (N-acetylmethionine). Polar residues-rich tracts occupy residues 77–103 and 131–145; these read TTEP…SNFS and VSTS…NVRQ. The segment at 77–145 is disordered; sequence TTEPSSLKSS…QESKTTNVRQ (69 aa). The residue at position 85 (serine 85) is a Phosphoserine. Glycyl lysine isopeptide (Lys-Gly) (interchain with G-Cter in SUMO2) cross-links involve residues lysine 99, lysine 139, lysine 175, and lysine 198. Serine 240 is subject to Phosphoserine. Lysine 245 is covalently cross-linked (Glycyl lysine isopeptide (Lys-Gly) (interchain with G-Cter in SUMO2)). Serine 281 is subject to Phosphoserine. Residues lysine 283 and lysine 295 each participate in a glycyl lysine isopeptide (Lys-Gly) (interchain with G-Cter in SUMO2) cross-link. The tract at residues 310-350 is disordered; the sequence is HDGEEEEEDDDYGSRTGSISSSVSVPAKPERRPSLPPSKQA. Phosphoserine is present on residues serine 327 and serine 343. Lysine 357 is modified (N6-acetyllysine; alternate). Lysine 357 is covalently cross-linked (Glycyl lysine isopeptide (Lys-Gly) (interchain with G-Cter in SUMO2); alternate). A Glycyl lysine isopeptide (Lys-Gly) (interchain with G-Cter in SUMO2) cross-link involves residue lysine 378. Serine 390 and serine 409 each carry phosphoserine. The interval 398-430 is disordered; sequence VVQGQSRTPRISPPIKEEETKGDSVEKNQGTQQ. Over residues 412–423 the composition is skewed to basic and acidic residues; sequence IKEEETKGDSVE. Residue lysine 413 forms a Glycyl lysine isopeptide (Lys-Gly) (interchain with G-Cter in SUMO2) linkage. At serine 421 the chain carries Phosphoserine. Lysine 489 is covalently cross-linked (Glycyl lysine isopeptide (Lys-Gly) (interchain with G-Cter in SUMO2)). Phosphoserine is present on residues serine 498, serine 515, serine 527, and serine 620. C3H1-type zinc fingers lie at residues 595-620, 621-640, 641-656, 682-699, and 701-719; these read EKLL…HPIS, PCKA…VHPN, CKYD…PFTH, CRYF…YHPK, and CRFN…HPTI.

The protein belongs to the ZC3H14 family. Homodimer; facilitating circular RNAs (circRNAs) formation. Associates with the spliceosome. Interacts with HOOK2. Interacts with ZFC3H1 in a RNase-sensitive manner. Expressed in fetal and adult brain. Expressed in fetal and adult temporal lobe.

The protein localises to the nucleus speckle. Its subcellular location is the cytoplasm. Its function is as follows. RNA-binding protein involved in the biogenesis of circular RNAs (circRNAs), which are produced by back-splicing circularization of pre-mRNAs. Acts by binding to both exon-intron boundary and 3'-UTR of pre-mRNAs to promote circRNA biogenesis through dimerization and the association with the spliceosome. Required for spermatogenesis via involvement in circRNA biogenesis. Regulates the pre-mRNA processing of ATP5MC1; preventing its degradation. Also binds the poly(A) tail of mRNAs; controlling poly(A) length in neuronal cells. This chain is Zinc finger CCCH domain-containing protein 14, found in Homo sapiens (Human).